We begin with the raw amino-acid sequence, 506 residues long: GTPase Der (506 aa).

2 consecutive EngA-type G domains span residues 3-166 and 218-391; these read PVVA…GEQL and IKIA…ACAT. GTP is bound by residues 9–16, 56–60, 118–121, 224–231, 271–275, and 336–339; these read GRPNVGKS, DTGGI, NKTD, DTAGV, and NKWD. A KH-like domain is found at 392–476; it reads QKNSTSMLTR…PIRIQFQEGN (85 aa).

This sequence belongs to the TRAFAC class TrmE-Era-EngA-EngB-Septin-like GTPase superfamily. EngA (Der) GTPase family. Associates with the 50S ribosomal subunit.

Its function is as follows. GTPase that plays an essential role in the late steps of ribosome biogenesis. The protein is GTPase Der of Actinobacillus pleuropneumoniae serotype 7 (strain AP76).